The following is a 359-amino-acid chain: Cyclin-Y-like protein 1 (359 aa).

Ser67, Ser105, and Ser112 each carry phosphoserine. A Cyclin N-terminal domain is found at 145–267; it reads VTLAIYYHIK…CQILKDITVE (123 aa). Ser344 carries the post-translational modification Phosphoserine.

Belongs to the cyclin family. Cyclin Y subfamily. Interacts with CDK16; this interaction mutually increases the stability of CDK16 and CCNYL1 and increases the kinase activity of CDK16.

It localises to the cell membrane. Key regulator of Wnt signaling implicated in various biological processes including male fertility, embryonic neurogenesis and cortex development. Activates the cyclin-dependent kinase CDK16, and promotes sperm maturation. The sequence is that of Cyclin-Y-like protein 1 from Homo sapiens (Human).